A 354-amino-acid chain; its full sequence is MTATLSDIRPEAPAVPVQLHRPARTPAPAAGTWSVQAVQELLDLPFMELLWRAQSVHREHWPAGDVELATLLSVKTGGCPENCGYCPQSAEFDTGVKAQKLMSVDEVTTAARAARDAGATRFCMGAAWRAPKDRDIEKVGELIAAVKGLGMQTCATLGMLEPHQAQALKGAGLDYYNHNLDTAPEYYTDVVSTRAYQERLDTLRHVREAGISVCCGGIIGMGEAPVHRAGLIAQLANLDPYPESVPINSLVRVPGTPLADSDPVDPLDFVRVIAVARITMPRARVRLSAGRQQMGDAVQALCFLAGANSIFYGDKLLVTGNPDVDADVQLLAKLGMNGRQVASTEPHDLHHHAP.

The region spanning 64–282 is the Radical SAM core domain; that stretch reads GDVELATLLS…IAVARITMPR (219 aa). [4Fe-4S] cluster is bound by residues Cys-79, Cys-83, and Cys-86. Residues Cys-123, Cys-154, Cys-214, and Arg-286 each coordinate [2Fe-2S] cluster.

The protein belongs to the radical SAM superfamily. Biotin synthase family. In terms of assembly, homodimer. It depends on [4Fe-4S] cluster as a cofactor. [2Fe-2S] cluster is required as a cofactor.

It catalyses the reaction (4R,5S)-dethiobiotin + (sulfur carrier)-SH + 2 reduced [2Fe-2S]-[ferredoxin] + 2 S-adenosyl-L-methionine = (sulfur carrier)-H + biotin + 2 5'-deoxyadenosine + 2 L-methionine + 2 oxidized [2Fe-2S]-[ferredoxin]. Its pathway is cofactor biosynthesis; biotin biosynthesis; biotin from 7,8-diaminononanoate: step 2/2. Its function is as follows. Catalyzes the conversion of dethiobiotin (DTB) to biotin by the insertion of a sulfur atom into dethiobiotin via a radical-based mechanism. This is Biotin synthase from Paracidovorax citrulli (strain AAC00-1) (Acidovorax citrulli).